Consider the following 137-residue polypeptide: Fibroblast growth factor 2 (137 aa).

Asn27 lines the heparin pocket. Tyr73 is modified (phosphotyrosine; by TEC). A Glycyl lysine isopeptide (Lys-Gly) (interchain with G-Cter in SUMO1) cross-link involves residue Lys86. A heparin-binding region spans residues 119 to 135; the sequence is KRTGQYKLGSKTGPGQK.

This sequence belongs to the heparin-binding growth factors family. As to quaternary structure, monomer. Homodimer. Interacts with FGFR1, FGFR2, FGFR3 and FGFR4. Affinity between fibroblast growth factors (FGFs) and their receptors is increased by heparan sulfate glycosaminoglycans that function as coreceptors. Interacts with CSPG4, FGFBP1 and TEC. Found in a complex with FGFBP1, FGF1 and FGF2. Interacts with FGFBP3. Interacts with integrin ITGAV:ITGB3; the interaction is required for FGF2 signaling. Interacts with SNORC (via the extracellular domain). Interacts with glypican GPC3. In terms of processing, phosphorylation at Tyr-73 regulates FGF2 unconventional secretion.

The protein localises to the secreted. It localises to the nucleus. Its function is as follows. Acts as a ligand for FGFR1, FGFR2, FGFR3 and FGFR4. Also acts as an integrin ligand which is required for FGF2 signaling. Binds to integrin ITGAV:ITGB3. Plays an important role in the regulation of cell survival, cell division, cell differentiation and cell migration. Functions as a potent mitogen in vitro. Can induce angiogenesis. Mediates phosphorylation of ERK1/2 and thereby promotes retinal lens fiber differentiation. In Oryctolagus cuniculus (Rabbit), this protein is Fibroblast growth factor 2 (FGF2).